A 471-amino-acid chain; its full sequence is Ribulose bisphosphate carboxylase large chain 2 (471 aa).

The substrate site is built by N116 and T166. Residue K168 is the Proton acceptor of the active site. K170 contributes to the substrate binding site. Mg(2+) is bound by residues K194, D196, and E197. An N6-carboxylysine modification is found at K194. H287 acts as the Proton acceptor in catalysis. R288, H320, and S372 together coordinate substrate.

This sequence belongs to the RuBisCO large chain family. Type I subfamily. Heterohexadecamer of 8 large chains and 8 small chains. Forms a CsoS2-CsoS1-RuBisCO complex. It depends on Mg(2+) as a cofactor.

The protein resides in the carboxysome. The catalysed reaction is 2 (2R)-3-phosphoglycerate + 2 H(+) = D-ribulose 1,5-bisphosphate + CO2 + H2O. It catalyses the reaction D-ribulose 1,5-bisphosphate + O2 = 2-phosphoglycolate + (2R)-3-phosphoglycerate + 2 H(+). Its function is as follows. RuBisCO catalyzes two reactions: the carboxylation of D-ribulose 1,5-bisphosphate, the primary event in carbon dioxide fixation, as well as the oxidative fragmentation of the pentose substrate. Both reactions occur simultaneously and in competition at the same active site. Replacing the endogenous type I ccbLS genes in H.neapolitanus with this carboxysomally targeted enzyme reconstitutes RuBisCO with about 25% of normal activity; the active enzyme is targeted to carboxysomes. In Hydrogenovibrio crunogenus (strain DSM 25203 / XCL-2) (Thiomicrospira crunogena), this protein is Ribulose bisphosphate carboxylase large chain 2.